The primary structure comprises 132 residues: Small ribosomal subunit protein uS8 (132 aa).

Belongs to the universal ribosomal protein uS8 family. As to quaternary structure, part of the 30S ribosomal subunit. Contacts proteins S5 and S12.

Functionally, one of the primary rRNA binding proteins, it binds directly to 16S rRNA central domain where it helps coordinate assembly of the platform of the 30S subunit. The sequence is that of Small ribosomal subunit protein uS8 from Lactobacillus johnsonii (strain CNCM I-12250 / La1 / NCC 533).